The sequence spans 932 residues: Protocadherin gamma-A12 (932 aa).

The first 29 residues, 1–29, serve as a signal peptide directing secretion; it reads MIPARLHRDYKGLVLLGILLGTLWETGCT. Cadherin domains are found at residues 30-133, 134-242, 243-347, 348-452, 453-562, and 570-683; these read QIRY…APYF, RESE…APAF, AQPE…APEV, VLTS…PPVF, PQAS…APEI, and DGST…SPAN. Residues 30-692 are Extracellular-facing; that stretch reads QIRYSVPEEL…NSETSDLTLY (663 aa). 3 N-linked (GlcNAc...) asparagine glycosylation sites follow: Asn-265, Asn-419, and Asn-545. The chain crosses the membrane as a helical span at residues 693 to 713; it reads LVVAVAAVSCVFLAFVILLLA. Over 714 to 932 the chain is Cytoplasmic; the sequence is LRLRRWHKSR…KKKSGKKEKK (219 aa). Disordered regions lie at residues 803 to 841 and 902 to 932; these read SHGLIEQAPPNTDWRFSQAQRPGTSGSQNGDDTGTWPNN and ATLTNAAGKRDGKAPAGGNGNKKKSGKKEKK. Over residues 816–841 the composition is skewed to polar residues; the sequence is WRFSQAQRPGTSGSQNGDDTGTWPNN. The span at 922-932 shows a compositional bias: basic residues; sequence NKKKSGKKEKK.

It localises to the cell membrane. Functionally, potential calcium-dependent cell-adhesion protein. May be involved in the establishment and maintenance of specific neuronal connections in the brain. The protein is Protocadherin gamma-A12 (PCDHGA12) of Homo sapiens (Human).